The following is a 236-amino-acid chain: MLEPQYKRVLLKLSGEALAGEKGFGLDPNVVTNIATQVKDIVNMGVEVAIVVGGGNYWRGRTGEGMDRTTADYMGMLATVINALALQDSLENLDVLTRVQSAIEMRQIAEPYIRRRAVRHLEKNRVVIFAAGTGNPYFSTDTTAALRAAEIEADVILLAKNVDGVYSADPSIDKTATKFNELTYIDVLKMGLKVMDSTAISLCMDNSIPIKVFGLEDPENIKKVIYGDKIGTYIYS.

12 to 15 contacts ATP; it reads KLSG. An involved in allosteric activation by GTP region spans residues 20 to 25; that stretch reads GEKGFG. Glycine 54 contacts UMP. Residues glycine 55 and arginine 59 each coordinate ATP. UMP is bound by residues aspartate 72 and 133 to 140; that span reads TGNPYFST. Residues asparagine 161, tyrosine 166, and aspartate 169 each coordinate ATP.

This sequence belongs to the UMP kinase family. Homohexamer.

The protein resides in the cytoplasm. The enzyme catalyses UMP + ATP = UDP + ADP. Its pathway is pyrimidine metabolism; CTP biosynthesis via de novo pathway; UDP from UMP (UMPK route): step 1/1. Allosterically activated by GTP. Inhibited by UTP. Catalyzes the reversible phosphorylation of UMP to UDP. This is Uridylate kinase from Alkaliphilus oremlandii (strain OhILAs) (Clostridium oremlandii (strain OhILAs)).